An 85-amino-acid chain; its full sequence is MKSDIHPKYAAVVFNDLASGTKFLTKSTVSSSKTIEWEDGNTYPVIDVEISSESHPFYTGKQRIMDSAGRVERFNARFKGFGGKK.

It belongs to the bacterial ribosomal protein bL31 family. Type B subfamily. As to quaternary structure, part of the 50S ribosomal subunit.

The chain is Large ribosomal subunit protein bL31B from Pseudarthrobacter chlorophenolicus (strain ATCC 700700 / DSM 12829 / CIP 107037 / JCM 12360 / KCTC 9906 / NCIMB 13794 / A6) (Arthrobacter chlorophenolicus).